Consider the following 288-residue polypeptide: Energy-coupling factor transporter ATP-binding protein EcfA2 (288 aa).

The ABC transporter domain occupies 3 to 246 (IKLEQLGYCY…PDELVDLGLS (244 aa)). 40-47 (GHTGSGKS) is an ATP binding site.

This sequence belongs to the ABC transporter superfamily. Energy-coupling factor EcfA family. In terms of assembly, forms a stable energy-coupling factor (ECF) transporter complex composed of 2 membrane-embedded substrate-binding proteins (S component), 2 ATP-binding proteins (A component) and 2 transmembrane proteins (T component).

Its subcellular location is the cell membrane. Its function is as follows. ATP-binding (A) component of a common energy-coupling factor (ECF) ABC-transporter complex. Unlike classic ABC transporters this ECF transporter provides the energy necessary to transport a number of different substrates. This is Energy-coupling factor transporter ATP-binding protein EcfA2 from Listeria monocytogenes serovar 1/2a (strain ATCC BAA-679 / EGD-e).